The sequence spans 464 residues: IAA-amino acid hydrolase ILR1-like 6 (464 aa).

A signal peptide spans 1 to 24 (MDNLRKLNLLSVSLTIIFVSLTIA). Mn(2+) is bound by residues cysteine 175, histidine 177, glutamate 211, histidine 235, and histidine 433.

Belongs to the peptidase M20 family.

It catalyses the reaction a jasmonyl-L-amino acid + H2O = a jasmonate + an L-alpha-amino acid. Functionally, hydrolyzes certain amino acid conjugates of the plant growth regulator indole-3-acetic acid (IAA). Also hydrolyzes amino acid conjugates of jasmonic acid and 12-hydroxy jasmonic acid. The protein is IAA-amino acid hydrolase ILR1-like 6 of Arabidopsis thaliana (Mouse-ear cress).